We begin with the raw amino-acid sequence, 201 residues long: Small ribosomal subunit protein uS4c (201 aa).

Positions alanine 17–tyrosine 44 are disordered. One can recognise an S4 RNA-binding domain in the interval methionine 89 to glutamine 149.

Belongs to the universal ribosomal protein uS4 family. Part of the 30S ribosomal subunit. Contacts protein S5. The interaction surface between S4 and S5 is involved in control of translational fidelity.

The protein resides in the plastid. It localises to the chloroplast. Its function is as follows. One of the primary rRNA binding proteins, it binds directly to 16S rRNA where it nucleates assembly of the body of the 30S subunit. In terms of biological role, with S5 and S12 plays an important role in translational accuracy. In Atropa belladonna (Belladonna), this protein is Small ribosomal subunit protein uS4c (rps4).